Here is a 614-residue protein sequence, read N- to C-terminus: Sodium- and chloride-dependent betaine transporter (614 aa).

The tract at residues methionine 1 to valine 33 is disordered. Topologically, residues methionine 1–glutamate 44 are cytoplasmic. Residues glutamate 21–valine 33 show a composition bias toward basic and acidic residues. A run of 3 helical transmembrane segments spans residues phenylalanine 45–leucine 65, alanine 73–leucine 92, and glycine 117–leucine 137. Residues alanine 138–arginine 210 lie on the Extracellular side of the membrane. Residues cysteine 157 and cysteine 166 are joined by a disulfide bond. N-linked (GlcNAc...) asparagine glycans are attached at residues asparagine 171 and asparagine 183. The next 9 membrane-spanning stretches (helical) occupy residues tryptophan 211 to tryptophan 229, valine 238 to isoleucine 255, isoleucine 291 to tyrosine 308, isoleucine 320 to leucine 341, methionine 374 to leucine 393, leucine 423 to threonine 441, glycine 458 to alanine 478, isoleucine 499 to serine 518, and isoleucine 538 to isoleucine 556. The Cytoplasmic segment spans residues threonine 557–leucine 614. Positions glycine 591–leucine 614 are disordered.

It belongs to the sodium:neurotransmitter symporter (SNF) (TC 2.A.22) family. SLC6A12 subfamily. As to quaternary structure, interacts with LIN7C. Kidney.

Its subcellular location is the basolateral cell membrane. The protein localises to the cell membrane. It catalyses the reaction 4-aminobutanoate(out) + chloride(out) + 3 Na(+)(out) = 4-aminobutanoate(in) + chloride(in) + 3 Na(+)(in). The enzyme catalyses glycine betaine(out) + 2 chloride(out) + 3 Na(+)(out) = glycine betaine(in) + 2 chloride(in) + 3 Na(+)(in). Transporter that mediates cellular uptake of betaine and GABA in a sodium- and chloride-dependent process. May have a role in regulation of GABAergic transmission in the brain through the reuptake of GABA into presynaptic terminals, as well as in osmotic regulation. Probably also involved in renal and hepatic osmotic regulation. This Canis lupus familiaris (Dog) protein is Sodium- and chloride-dependent betaine transporter (SLC6A12).